The sequence spans 439 residues: Serine/threonine-protein kinase 2 (439 aa).

The 353-residue stretch at asparagine 87–asparagine 439 folds into the Protein kinase domain. Residues isoleucine 93–valine 101 and lysine 117 contribute to the ATP site. The active-site Proton acceptor is the aspartate 307.

The protein belongs to the protein kinase superfamily. Ser/Thr protein kinase family. Poxviruses subfamily. Post-translationally, phosphorylated in vivo. Autophosphorylated in vitro.

It localises to the host endoplasmic reticulum. The protein localises to the host endoplasmic reticulum-Golgi intermediate compartment. The catalysed reaction is L-seryl-[protein] + ATP = O-phospho-L-seryl-[protein] + ADP + H(+). The enzyme catalyses L-threonyl-[protein] + ATP = O-phospho-L-threonyl-[protein] + ADP + H(+). Functionally, essential serine-protein kinase involved in the early stage of virion morphogenesis. In Vaccinia virus (strain Ankara) (VACV), this protein is Serine/threonine-protein kinase 2 (OPG054).